Reading from the N-terminus, the 519-residue chain is Cobyric acid synthase (519 aa).

The GATase cobBQ-type domain maps to 256–438; it reads WLRVAVPRLP…WHGLFENDAF (183 aa). C337 (nucleophile) is an active-site residue. The active site involves H430.

Belongs to the CobB/CobQ family. CobQ subfamily.

It participates in cofactor biosynthesis; adenosylcobalamin biosynthesis. Catalyzes amidations at positions B, D, E, and G on adenosylcobyrinic A,C-diamide. NH(2) groups are provided by glutamine, and one molecule of ATP is hydrogenolyzed for each amidation. The chain is Cobyric acid synthase from Saccharopolyspora erythraea (strain ATCC 11635 / DSM 40517 / JCM 4748 / NBRC 13426 / NCIMB 8594 / NRRL 2338).